The primary structure comprises 2871 residues: MRRGRLLEIALGFTVLLASYTSHGADANLEAGNVKETRASRAKRRGGGGHDALKGPNVCGSRYNAYCCPGWKTLPGGNQCIVPICRHSCGDGFCSRPNMCTCPSGQIAPSCGSRSIQHCNIRCMNGGSCSDDHCLCQKGYIGTHCGQPVCESGCLNGGRCVAPNRCACTYGFTGPQCERDYRTGPCFTVISNQMCQGQLSGIVCTKTLCCATVGRAWGHPCEMCPAQPHPCRRGFIPNIRTGACQDVDECQAIPGLCQGGNCINTVGSFECKCPAGHKLNEVSQKCEDIDECSTIPGICEGGECTNTVSSYFCKCPPGFYTSPDGTRCIDVRPGYCYTALTNGRCSNQLPQSITKMQCCCDAGRCWSPGVTVAPEMCPIRATEDFNKLCSVPMVIPGRPEYPPPPLGPIPPVLPVPPGFPPGPQIPVPRPPVEYLYPSREPPRVLPVNVTDYCQLVRYLCQNGRCIPTPGSYRCECNKGFQLDLRGECIDVDECEKNPCAGGECINNQGSYTCQCRAGYQSTLTRTECRDIDECLQNGRICNNGRCINTDGSFHCVCNAGFHVTRDGKNCEDMDECSIRNMCLNGMCINEDGSFKCICKPGFQLASDGRYCKDINECETPGICMNGRCVNTDGSYRCECFPGLAVGLDGRVCVDTHMRSTCYGGYKRGQCIKPLFGAVTKSECCCASTEYAFGEPCQPCPAQNSAEYQALCSSGPGMTSAGSDINECALDPDICPNGICENLRGTYKCICNSGYEVDSTGKNCVDINECVLNSLLCDNGQCRNTPGSFVCTCPKGFIYKPDLKTCEDIDECESSPCINGVCKNSPGSFICECSSESTLDPTKTICIETIKGTCWQTVIDGRCEININGATLKSQCCSSLGAAWGSPCTLCQVDPICGKGYSRIKGTQCEDIDECEVFPGVCKNGLCVNTRGSFKCQCPSGMTLDATGRICLDIRLETCFLRYEDEECTLPIAGRHRMDACCCSVGAAWGTEECEECPMRNTPEYEELCPRGPGFATKEITNGKPFFKDINECKMIPSLCTHGKCRNTIGSFKCRCDSGFALDSEERNCTDIDECRISPDLCGRGQCVNTPGDFECKCDEGYESGFMMMKNCMDIDECQRDPLLCRGGVCHNTEGSYRCECPPGHQLSPNISACIDINECELSAHLCPNGRCVNLIGKYQCACNPGYHSTPDRLFCVDIDECSIMNGGCETFCTNSEGSYECSCQPGFALMPDQRSCTDIDECEDNPNICDGGQCTNIPGEYRCLCYDGFMASEDMKTCVDVNECDLNPNICLSGTCENTKGSFICHCDMGYSGKKGKTGCTDINECEIGAHNCGKHAVCTNTAGSFKCSCSPGWIGDGIKCTDLDECSNGTHMCSQHADCKNTMGSYRCLCKEGYTGDGFTCTDLDECSENLNLCGNGQCLNAPGGYRCECDMGFVPSADGKACEDIDECSLPNICVFGTCHNLPGLFRCECEIGYELDRSGGNCTDVNECLDPTTCISGNCVNTPGSYICDCPPDFELNPTRVGCVDTRSGNCYLDIRPRGDNGDTACSNEIGVGVSKASCCCSLGKAWGTPCEMCPAVNTSEYKILCPGGEGFRPNPITVILEDIDECQELPGLCQGGKCINTFGSFQCRCPTGYYLNEDTRVCDDVNECETPGICGPGTCYNTVGNYTCICPPDYMQVNGGNNCMDMRRSLCYRNYYADNQTCDGELLFNMTKKMCCCSYNIGRAWNKPCEQCPIPSTDEFATLCGSQRPGFVIDIYTGLPVDIDECREIPGVCENGVCINMVGSFRCECPVGFFYNDKLLVCEDIDECQNGPVCQRNAECINTAGSYRCDCKPGYRFTSTGQCNDRNECQEIPNICSHGQCIDTVGSFYCLCHTGFKTNDDQTMCLDINECERDACGNGTCRNTIGSFNCRCNHGFILSHNNDCIDVDECASGNGNLCRNGQCINTVGSFQCQCNEGYEVAPDGRTCVDINECLLEPRKCAPGTCQNLDGSYRCICPPGYSLQNEKCEDIDECVEEPEICALGTCSNTEGSFKCLCPEGFSLSSSGRRCQDLRMSYCYAKFEGGKCSSPKSRNHSKQECCCALKGEGWGDPCELCPTEPDEAFRQICPYGSGIIVGPDDSAVDMDECKEPDVCKHGQCINTDGSYRCECPFGYILAGNECVDTDECSVGNPCGNGTCKNVIGGFECTCEEGFEPGPMMTCEDINECAQNPLLCAFRCVNTYGSYECKCPVGYVLREDRRMCKDEDECEEGKHDCTEKQMECKNLIGTYMCICGPGYQRRPDGEGCVDENECQTKPGICENGRCLNTRGSYTCECNDGFTASPNQDECLDNREGYCFTEVLQNMCQIGSSNRNPVTKSECCCDGGRGWGPHCEICPFQGTVAFKKLCPHGRGFMTNGADIDECKVIHDVCRNGECVNDRGSYHCICKTGYTPDITGTSCVDLNECNQAPKPCNFICKNTEGSYQCSCPKGYILQEDGRSCKDLDECATKQHNCQFLCVNTIGGFTCKCPPGFTQHHTSCIDNNECTSDINLCGSKGICQNTPGSFTCECQRGFSLDQTGSSCEDVDECEGNHRCQHGCQNIIGGYRCSCPQGYLQHYQWNQCVDENECLSAHICGGASCHNTLGSYKCMCPAGFQYEQFSGGCQDINECGSAQAPCSYGCSNTEGGYLCGCPPGYFRIGQGHCVSGMGMGRGNPEPPVSGEMDDNSLSPEACYECKINGYPKRGRKRRSTNETDASNIEDQSETEANVSLASWDVEKTAIFAFNISHVSNKVRILELLPALTTLTNHNRYLIESGNEDGFFKINQKEGISYLHFTKKKPVAGTYSLQISSTPLYKKKELNQLEDKYDKDYLSGELGDNLKMKIQVLLH.

Residues 1-24 (MRRGRLLEIALGFTVLLASYTSHG) form the signal peptide. The propeptide occupies 25–44 (ADANLEAGNVKETRASRAKR). Positions 45–81 (RGGGGHDALKGPNVCGSRYNAYCCPGWKTLPGGNQCI) are fibrillin unique N-terminal (FUN) domain. Positions 45-450 (RGGGGHDALK…PPRVLPVNVT (406 aa)) are N-terminal domain. 11 cysteine pairs are disulfide-bonded: C59/C68, C67/C80, C85/C94, C89/C100, C102/C111, C119/C129, C123/C134, C136/C145, C150/C160, C154/C166, and C168/C177. 3 consecutive EGF-like domains span residues 81–112 (IVPICRHSCGDGFCSRPNMCTCPSGQIAPSCG), 115–146 (SIQHCNIRCMNGGSCSDDHCLCQKGYIGTHCG), and 147–178 (QPVCESGCLNGGRCVAPNRCACTYGFTGPQCE). An interaction with MFAP4 region spans residues 119 to 329 (CNIRCMNGGS…YTSPDGTRCI (211 aa)). In terms of domain architecture, TB 1 spans 184-236 (GPCFTVISNQMCQGQLSGIVCTKTLCCATVGRAWGHPCEMCPAQPHPCRRGFI). The tract at residues 195 to 221 (CQGQLSGIVCTKTLCCATVGRAWGHPC) is hybrid domain 1. The EGF-like 4; calcium-binding domain maps to 246 to 287 (DVDECQAIPGLCQGGNCINTVGSFECKCPAGHKLNEVSQKCE). Disulfide bonds link C250/C262, C257/C271, C273/C286, C292/C304, C299/C313, and C315/C328. S268 carries an O-linked (Glc) serine glycan. One can recognise an EGF-like 5; calcium-binding domain in the interval 288–329 (DIDECSTIPGICEGGECTNTVSSYFCKCPPGFYTSPDGTRCI). The TB 2 domain maps to 334–389 (GYCYTALTNGRCSNQLPQSITKMQCCCDAGRCWSPGVTVAPEMCPIRATEDFNKLC). N-linked (GlcNAc...) asparagine glycosylation occurs at N448. The region spanning 449-489 (VTDYCQLVRYLCQNGRCIPTPGSYRCECNKGFQLDLRGECI) is the EGF-like 6 domain. Disulfide bonds link C453/C465, C460/C474, C476/C488, C494/C504, C499/C513, C515/C528, C534/C546, C541/C555, C557/C570, C576/C587, C582/C596, C598/C611, C617/C628, C623/C637, and C639/C652. O-linked (Glc) serine glycosylation is present at S471. In terms of domain architecture, EGF-like 7; calcium-binding spans 490–529 (DVDECEKNPCAGGECINNQGSYTCQCRAGYQSTLTRTECR). Residue S510 is glycosylated (O-linked (Glc) serine). Positions 530 to 571 (DIDECLQNGRICNNGRCINTDGSFHCVCNAGFHVTRDGKNCE) constitute an EGF-like 8; calcium-binding domain. O-linked (Glc) serine glycosylation is present at S552. The EGF-like 9; calcium-binding domain maps to 572–612 (DMDECSIRNMCLNGMCINEDGSFKCICKPGFQLASDGRYCK). An O-linked (Glc) serine glycan is attached at S593. The EGF-like 10; calcium-binding domain occupies 613-653 (DINECETPGICMNGRCVNTDGSYRCECFPGLAVGLDGRVCV). O-linked (Glc) serine glycosylation occurs at S634. Residues 659-711 (STCYGGYKRGQCIKPLFGAVTKSECCCASTEYAFGEPCQPCPAQNSAEYQALC) form the TB 3 domain. In terms of domain architecture, EGF-like 11; calcium-binding spans 723 to 764 (DINECALDPDICPNGICENLRGTYKCICNSGYEVDSTGKNCV). 16 disulfides stabilise this stretch: C727-C739, C734-C748, C750-C763, C769-C781, C776-C790, C792-C805, C811-C821, C816-C830, C832-C845, C853-C875, C862-C887, C876-C890, C896-C908, C914-C926, C921-C935, and C937-C950. The EGF-like 12; calcium-binding domain maps to 765-806 (DINECVLNSLLCDNGQCRNTPGSFVCTCPKGFIYKPDLKTCE). An O-linked (Glc) serine glycan is attached at S787. One can recognise an EGF-like 13; calcium-binding domain in the interval 807-846 (DIDECESSPCINGVCKNSPGSFICECSSESTLDPTKTICI). S827 carries an O-linked (Glc) serine glycan. A TB 4 domain is found at 851–902 (GTCWQTVIDGRCEININGATLKSQCCSSLGAAWGSPCTLCQVDPICGKGYSR). Residues 862–887 (CEININGATLKSQCCSSLGAAWGSPC) form a hybrid domain 2 region. Residues 910–951 (DIDECEVFPGVCKNGLCVNTRGSFKCQCPSGMTLDATGRICL) enclose the EGF-like 14; calcium-binding domain. The TB 5 domain occupies 956–1008 (ETCFLRYEDEECTLPIAGRHRMDACCCSVGAAWGTEECEECPMRNTPEYEELC). The EGF-like 15; calcium-binding domain occupies 1028-1069 (DINECKMIPSLCTHGKCRNTIGSFKCRCDSGFALDSEERNCT). Disulfide bonds link C1032-C1044, C1039-C1053, C1055-C1068, C1074-C1086, C1081-C1095, C1097-C1111, C1117-C1129, C1124-C1138, C1140-C1153, C1159-C1171, C1166-C1180, C1182-C1195, C1201-C1212, C1208-C1221, C1223-C1236, C1242-C1254, C1249-C1263, C1265-C1278, C1284-C1296, C1291-C1305, C1307-C1320, C1326-C1339, C1333-C1348, C1350-C1361, C1367-C1380, C1374-C1389, C1391-C1402, C1408-C1420, C1415-C1429, C1431-C1444, C1450-C1461, C1456-C1470, C1472-C1485, C1491-C1502, C1497-C1511, C1513-C1526, C1534-C1562, C1549-C1574, C1563-C1577, C1564-C1589, C1610-C1622, C1617-C1631, C1633-C1646, C1652-C1663, C1658-C1672, and C1674-C1687. An O-linked (Glc) serine glycan is attached at S1050. Residue N1067 is glycosylated (N-linked (GlcNAc...) asparagine). In terms of domain architecture, EGF-like 16; calcium-binding spans 1070–1112 (DIDECRISPDLCGRGQCVNTPGDFECKCDEGYESGFMMMKNCM). Residues 1113–1154 (DIDECQRDPLLCRGGVCHNTEGSYRCECPPGHQLSPNISACI) form the EGF-like 17; calcium-binding domain. The O-linked (Glc) serine glycan is linked to S1135. N-linked (GlcNAc...) asparagine glycosylation occurs at N1149. The 42-residue stretch at 1155–1196 (DINECELSAHLCPNGRCVNLIGKYQCACNPGYHSTPDRLFCV) folds into the EGF-like 18; calcium-binding domain. In terms of domain architecture, EGF-like 19; calcium-binding spans 1197-1237 (DIDECSIMNGGCETFCTNSEGSYECSCQPGFALMPDQRSCT). Residue S1218 is glycosylated (O-linked (Glc) serine). The 42-residue stretch at 1238 to 1279 (DIDECEDNPNICDGGQCTNIPGEYRCLCYDGFMASEDMKTCV) folds into the EGF-like 20; calcium-binding domain. The EGF-like 21; calcium-binding domain maps to 1280 to 1321 (DVNECDLNPNICLSGTCENTKGSFICHCDMGYSGKKGKTGCT). S1302 carries O-linked (Glc) serine glycosylation. An EGF-like 22; calcium-binding domain is found at 1322 to 1362 (DINECEIGAHNCGKHAVCTNTAGSFKCSCSPGWIGDGIKCT). S1345 carries an O-linked (Glc) serine glycan. One can recognise an EGF-like 23; calcium-binding domain in the interval 1363 to 1403 (DLDECSNGTHMCSQHADCKNTMGSYRCLCKEGYTGDGFTCT). N-linked (GlcNAc...) asparagine glycosylation occurs at N1369. S1386 carries an O-linked (Glc) serine glycan. The region spanning 1404 to 1445 (DLDECSENLNLCGNGQCLNAPGGYRCECDMGFVPSADGKACE) is the EGF-like 24; calcium-binding domain. In terms of domain architecture, EGF-like 25; calcium-binding spans 1446-1486 (DIDECSLPNICVFGTCHNLPGLFRCECEIGYELDRSGGNCT). N-linked (GlcNAc...) asparagine glycosylation occurs at N1484. An EGF-like 26; calcium-binding domain is found at 1487–1527 (DVNECLDPTTCISGNCVNTPGSYICDCPPDFELNPTRVGCV). O-linked (Glc) serine glycosylation occurs at S1508. Positions 1528-2731 (DTRSGNCYLD…GYPKRGRKRR (1204 aa)) are C-terminal domain. Residues 1532 to 1589 (GNCYLDIRPRGDNGDTACSNEIGVGVSKASCCCSLGKAWGTPCEMCPAVNTSEYKILC) form the TB 6 domain. Residues 1541–1543 (RGD) carry the Cell attachment site motif. Residue N1581 is glycosylated (N-linked (GlcNAc...) asparagine). Residues 1606–1647 (DIDECQELPGLCQGGKCINTFGSFQCRCPTGYYLNEDTRVCD) form the EGF-like 27; calcium-binding domain. The O-linked (Glc) serine glycan is linked to S1628. An EGF-like 28; calcium-binding domain is found at 1648–1688 (DVNECETPGICGPGTCYNTVGNYTCICPPDYMQVNGGNNCM). N1669 carries N-linked (GlcNAc...) asparagine glycosylation. The 56-residue stretch at 1693-1748 (SLCYRNYYADNQTCDGELLFNMTKKMCCCSYNIGRAWNKPCEQCPIPSTDEFATLC) folds into the TB 7 domain. Residues N1703 and N1713 are each glycosylated (N-linked (GlcNAc...) asparagine). An EGF-like 29; calcium-binding domain is found at 1766-1807 (DIDECREIPGVCENGVCINMVGSFRCECPVGFFYNDKLLVCE). Disulfide bonds link C1770–C1782, C1777–C1791, C1793–C1806, C1812–C1824, C1818–C1833, C1835–C1847, C1853–C1865, C1860–C1874, C1876–C1889, C1895–C1905, C1900–C1914, C1916–C1928, C1934–C1947, C1942–C1956, C1958–C1971, C1977–C1989, C1984–C1998, C2000–C2011, C2017–C2029, C2024–C2038, C2040–C2053, C2061–C2083, C2070–C2096, C2084–C2099, C2085–C2111, C2131–C2142, C2137–C2151, C2153–C2164, C2170–C2181, C2176–C2190, C2192–C2204, C2210–C2221, C2217–C2230, C2232–C2245, C2251–C2265, C2258–C2274, C2276–C2289, C2295–C2307, C2302–C2316, and C2318–C2331. The EGF-like 30; calcium-binding domain maps to 1808-1848 (DIDECQNGPVCQRNAECINTAGSYRCDCKPGYRFTSTGQCN). Residue S1830 is glycosylated (O-linked (Glc) serine). One can recognise an EGF-like 31; calcium-binding domain in the interval 1849 to 1890 (DRNECQEIPNICSHGQCIDTVGSFYCLCHTGFKTNDDQTMCL). The O-linked (Glc) serine glycan is linked to S1871. The region spanning 1891–1929 (DINECERDACGNGTCRNTIGSFNCRCNHGFILSHNNDCI) is the EGF-like 32; calcium-binding domain. A glycan (N-linked (GlcNAc...) asparagine) is linked at N1902. O-linked (Glc) serine glycosylation occurs at S1911. In terms of domain architecture, EGF-like 33; calcium-binding spans 1930 to 1972 (DVDECASGNGNLCRNGQCINTVGSFQCQCNEGYEVAPDGRTCV). S1953 carries an O-linked (Glc) serine glycan. The region spanning 1973–2012 (DINECLLEPRKCAPGTCQNLDGSYRCICPPGYSLQNEKCE) is the EGF-like 34; calcium-binding domain. Positions 2013–2054 (DIDECVEEPEICALGTCSNTEGSFKCLCPEGFSLSSSGRRCQ) constitute an EGF-like 35; calcium-binding domain. O-linked (Glc) serine glycosylation occurs at S2035. A TB 8 domain is found at 2059 to 2111 (SYCYAKFEGGKCSSPKSRNHSKQECCCALKGEGWGDPCELCPTEPDEAFRQIC). Residue N2077 is glycosylated (N-linked (GlcNAc...) asparagine). An EGF-like 36; calcium-binding domain is found at 2127 to 2165 (DMDECKEPDVCKHGQCINTDGSYRCECPFGYILAGNECV). S2148 carries an O-linked (Glc) serine glycan. The EGF-like 37; calcium-binding domain occupies 2166-2205 (DTDECSVGNPCGNGTCKNVIGGFECTCEEGFEPGPMMTCE). A glycan (N-linked (GlcNAc...) asparagine) is linked at N2178. Residues 2206–2246 (DINECAQNPLLCAFRCVNTYGSYECKCPVGYVLREDRRMCK) enclose the EGF-like 38; calcium-binding domain. S2227 carries an O-linked (Glc) serine glycan. One can recognise an EGF-like 39; calcium-binding domain in the interval 2247–2290 (DEDECEEGKHDCTEKQMECKNLIGTYMCICGPGYQRRPDGEGCV). The region spanning 2291–2332 (DENECQTKPGICENGRCLNTRGSYTCECNDGFTASPNQDECL) is the EGF-like 40; calcium-binding domain. An O-linked (Glc) serine glycan is attached at S2313. The TB 9 domain occupies 2337–2390 (GYCFTEVLQNMCQIGSSNRNPVTKSECCCDGGRGWGPHCEICPFQGTVAFKKLC). The region spanning 2402–2443 (DIDECKVIHDVCRNGECVNDRGSYHCICKTGYTPDITGTSCV) is the EGF-like 41; calcium-binding domain. Intrachain disulfides connect C2406–C2418, C2413–C2427, C2429–C2442, C2448–C2459, C2455–C2468, C2470–C2483, C2489–C2500, C2496–C2509, C2511–C2522, C2528–C2541, C2535–C2550, C2552–C2565, C2571–C2581, C2577–C2590, C2592–C2605, C2611–C2622, C2617–C2631, C2633–C2646, C2652–C2663, C2659–C2672, and C2674–C2686. The 41-residue stretch at 2444-2484 (DLNECNQAPKPCNFICKNTEGSYQCSCPKGYILQEDGRSCK) folds into the EGF-like 42; calcium-binding domain. S2465 carries an O-linked (Glc) serine glycan. The 39-residue stretch at 2485–2523 (DLDECATKQHNCQFLCVNTIGGFTCKCPPGFTQHHTSCI) folds into the EGF-like 43; calcium-binding domain. The region spanning 2524-2566 (DNNECTSDINLCGSKGICQNTPGSFTCECQRGFSLDQTGSSCE) is the EGF-like 44; calcium-binding domain. A glycan (O-linked (Glc) serine) is linked at S2547. Residues 2567–2606 (DVDECEGNHRCQHGCQNIIGGYRCSCPQGYLQHYQWNQCV) form the EGF-like 45; calcium-binding domain. In terms of domain architecture, EGF-like 46; calcium-binding spans 2607–2647 (DENECLSAHICGGASCHNTLGSYKCMCPAGFQYEQFSGGCQ). A glycan (O-linked (Glc) serine) is linked at S2628. In terms of domain architecture, EGF-like 47; calcium-binding spans 2648 to 2687 (DINECGSAQAPCSYGCSNTEGGYLCGCPPGYFRIGQGHCV). S2702 is subject to Phosphoserine; by FAM20C. The residue at position 2709 (S2709) is a Phosphoserine. The tract at residues 2726-2746 (RGRKRRSTNETDASNIEDQSE) is disordered. An N-linked (GlcNAc...) asparagine glycan is attached at N2734. Polar residues predominate over residues 2735–2746 (ETDASNIEDQSE). Residues N2750 and N2767 are each glycosylated (N-linked (GlcNAc...) asparagine).

This sequence belongs to the fibrillin family. Interacts with COL16A1. Interacts with integrin alpha-V/beta-3. Interacts with ADAMTS10; this interaction promotes microfibril assembly. Interacts with THSD4; this interaction promotes fibril formation. Interacts (via N-terminal domain) with FBLN2 and FBLN5. Interacts with ELN. Forms a ternary complex with ELN and FBLN2 or FBLN5 and a significant interaction with ELN seen only in the presence of FBLN2 or FBLN5. Interacts (via N-terminal domain) with LTBP2 (via C-terminal domain) in a Ca(+2)-dependent manner. Interacts (via N-terminal domain) with LTBP1 (via C-terminal domain). Interacts with integrins ITGA5:ITGB1, ITGAV:ITGB3 and ITGAV:ITGB6. Interacts (via N-terminal domain) with BMP2, BMP4, BMP7, BMP10 and GDF5. Interacts (via N-terminal domain) with MFAP2 and MFAP5. Interacts with ADAMTSL5. Interacts with MFAP4. Interacts (via N-terminal domain) with TNFSF11 in a Ca(+2)-dependent manner. Interacts (via N-terminal domain) with EFEMP2; this interaction inhibits EFEMP2 binding to LOX and ELN. Cleavage of N- and C-terminus by furin is required for incorporation into the extracellular matrix and assembly into microfibrils. The C-terminus, which corresponds to the Asprosin chain, was initially thought to constitute a propeptide. Fibrillin-1 and Asprosin chains are still linked together during the secretion from cells, but are subsequently separated by furin, an essential step for incorporation of Fibrillin-1 into the nascent microfibrils. In terms of processing, forms intermolecular disulfide bonds either with other fibrillin-1 molecules or with other components of the microfibrils. Post-translationally, O-glycosylated on serine residues by POGLUT2 and POGLUT3 which is necessary for efficient protein secretion.

The protein resides in the secreted. Its subcellular location is the extracellular space. The protein localises to the extracellular matrix. Structural component of the 10-12 nm diameter microfibrils of the extracellular matrix, which conveys both structural and regulatory properties to load-bearing connective tissues. Fibrillin-1-containing microfibrils provide long-term force bearing structural support. In tissues such as the lung, blood vessels and skin, microfibrils form the periphery of the elastic fiber, acting as a scaffold for the deposition of elastin. In addition, microfibrils can occur as elastin-independent networks in tissues such as the ciliary zonule, tendon, cornea and glomerulus where they provide tensile strength and have anchoring roles. Fibrillin-1 also plays a key role in tissue homeostasis through specific interactions with growth factors, such as the bone morphogenetic proteins (BMPs), growth and differentiation factors (GDFs) and latent transforming growth factor-beta-binding proteins (LTBPs), cell-surface integrins and other extracellular matrix protein and proteoglycan components. Regulates osteoblast maturation by controlling TGF-beta bioavailability and calibrating TGF-beta and BMP levels, respectively. Negatively regulates osteoclastogenesis by binding and sequestering an osteoclast differentiation and activation factor TNFSF11. This leads to disruption of TNFSF11-induced Ca(2+) signaling and impairment of TNFSF11-mediated nuclear translocation and activation of transcription factor NFATC1 which regulates genes important for osteoclast differentiation and function. Mediates cell adhesion via its binding to cell surface receptors integrins ITGAV:ITGB3 and ITGA5:ITGB1. Binds heparin and this interaction has an important role in the assembly of microfibrils. In terms of biological role, adipokine secreted by white adipose tissue that plays an important regulatory role in the glucose metabolism of liver, muscle and pancreas. Hormone that targets the liver in response to fasting to increase plasma glucose levels. Binds the olfactory receptor OR4M1 at the surface of hepatocytes and promotes hepatocyte glucose release by activating the protein kinase A activity in the liver, resulting in rapid glucose release into the circulation. May act as a regulator of adaptive thermogenesis by inhibiting browning and energy consumption, while increasing lipid deposition in white adipose tissue. Also acts as an orexigenic hormone that increases appetite: crosses the blood brain barrier and exerts effects on the hypothalamus. In the arcuate nucleus of the hypothalamus, asprosin directly activates orexigenic AgRP neurons and indirectly inhibits anorexigenic POMC neurons, resulting in appetite stimulation. Activates orexigenic AgRP neurons via binding to the olfactory receptor OR4M1. May also play a role in sperm motility in testis via interaction with OR4M1 receptor. The chain is Fibrillin-1 from Homo sapiens (Human).